Reading from the N-terminus, the 400-residue chain is CinA-like protein (400 aa).

This sequence belongs to the CinA family.

This Escherichia coli (strain 55989 / EAEC) protein is CinA-like protein.